Reading from the N-terminus, the 556-residue chain is Arginine--tRNA ligase (556 aa).

Residues 132 to 142 carry the 'HIGH' region motif; sequence ANPTGDLHLGH.

The protein belongs to the class-I aminoacyl-tRNA synthetase family. As to quaternary structure, monomer.

The protein resides in the cytoplasm. It carries out the reaction tRNA(Arg) + L-arginine + ATP = L-arginyl-tRNA(Arg) + AMP + diphosphate. The polypeptide is Arginine--tRNA ligase (Bacillus cereus (strain ATCC 14579 / DSM 31 / CCUG 7414 / JCM 2152 / NBRC 15305 / NCIMB 9373 / NCTC 2599 / NRRL B-3711)).